A 192-amino-acid chain; its full sequence is Segregation and condensation protein B (192 aa).

Belongs to the ScpB family. As to quaternary structure, homodimer. Homodimerization may be required to stabilize the binding of ScpA to the Smc head domains. Component of a cohesin-like complex composed of ScpA, ScpB and the Smc homodimer, in which ScpA and ScpB bind to the head domain of Smc. The presence of the three proteins is required for the association of the complex with DNA.

The protein resides in the cytoplasm. Its function is as follows. Participates in chromosomal partition during cell division. May act via the formation of a condensin-like complex containing Smc and ScpA that pull DNA away from mid-cell into both cell halves. The polypeptide is Segregation and condensation protein B (Oceanobacillus iheyensis (strain DSM 14371 / CIP 107618 / JCM 11309 / KCTC 3954 / HTE831)).